We begin with the raw amino-acid sequence, 306 residues long: UDP-N-acetylenolpyruvoylglucosamine reductase (306 aa).

One can recognise an FAD-binding PCMH-type domain in the interval 34–198; that stretch reads VGGPADLLIT…LEVTFKLHNS (165 aa). Arg177 is an active-site residue. Ser227 serves as the catalytic Proton donor. The active site involves Glu297.

The protein belongs to the MurB family. FAD is required as a cofactor.

It localises to the cytoplasm. The enzyme catalyses UDP-N-acetyl-alpha-D-muramate + NADP(+) = UDP-N-acetyl-3-O-(1-carboxyvinyl)-alpha-D-glucosamine + NADPH + H(+). It functions in the pathway cell wall biogenesis; peptidoglycan biosynthesis. Functionally, cell wall formation. This Clostridium botulinum (strain 657 / Type Ba4) protein is UDP-N-acetylenolpyruvoylglucosamine reductase.